Consider the following 275-residue polypeptide: Aldo-keto reductase MSMEG_2408/MSMEI_2347 (275 aa).

The active-site Proton donor is the Y49. Residues L189, I227, K229, S230, V231, R235, S238, and N239 each contribute to the NADPH site. An Isoglutamyl lysine isopeptide (Lys-Gln) (interchain with Q-Cter in protein Pup) cross-link involves residue K262.

The protein belongs to the aldo/keto reductase family.

The polypeptide is Aldo-keto reductase MSMEG_2408/MSMEI_2347 (Mycolicibacterium smegmatis (strain ATCC 700084 / mc(2)155) (Mycobacterium smegmatis)).